The sequence spans 481 residues: tRNA:m(4)X modification enzyme TRM13 homolog (481 aa).

The segment at 56-83 (RILCPLDPKHTVYEDQLAKHLKKCNSRE) adopts a CHHC U11-48K-type zinc-finger fold. Residues Cys-59, His-65, His-75, and Cys-79 each contribute to the Zn(2+) site. Residues 113-140 (SLSEEQLENLIKKLRKASEGLNSTHEDH) adopt a coiled-coil conformation. Disordered regions lie at residues 296–319 (AKRI…SEKD) and 379–414 (LEGS…TDSL). Residues 385 to 407 (TPERKDAQRDENEEHDDGGDRLT) are compositionally biased toward basic and acidic residues.

Belongs to the methyltransferase TRM13 family.

It carries out the reaction cytidine(4) in tRNA(Pro) + S-adenosyl-L-methionine = 2'-O-methylcytidine(4) in tRNA(Pro) + S-adenosyl-L-homocysteine + H(+). The enzyme catalyses cytidine(4) in tRNA(Gly)(GCC) + S-adenosyl-L-methionine = 2'-O-methylcytidine(4) in tRNA(Gly)(GCC) + S-adenosyl-L-homocysteine + H(+). The catalysed reaction is adenosine(4) in tRNA(His) + S-adenosyl-L-methionine = 2'-O-methyladenosine(4) in tRNA(His) + S-adenosyl-L-homocysteine + H(+). Its function is as follows. tRNA methylase which 2'-O-methylates cytidine(4) in tRNA(Pro) and tRNA(Gly)(GCC), and adenosine(4) in tRNA(His). This Mus musculus (Mouse) protein is tRNA:m(4)X modification enzyme TRM13 homolog (Trmt13).